The sequence spans 195 residues: Imidazoleglycerol-phosphate dehydratase (195 aa).

Belongs to the imidazoleglycerol-phosphate dehydratase family.

The protein localises to the cytoplasm. It catalyses the reaction D-erythro-1-(imidazol-4-yl)glycerol 3-phosphate = 3-(imidazol-4-yl)-2-oxopropyl phosphate + H2O. It functions in the pathway amino-acid biosynthesis; L-histidine biosynthesis; L-histidine from 5-phospho-alpha-D-ribose 1-diphosphate: step 6/9. The polypeptide is Imidazoleglycerol-phosphate dehydratase (Bordetella bronchiseptica (strain ATCC BAA-588 / NCTC 13252 / RB50) (Alcaligenes bronchisepticus)).